A 238-amino-acid chain; its full sequence is Tyrosine recombinase XerD-like (238 aa).

Residues 1–75 form the Core-binding (CB) domain; the sequence is MKLPNEIEEY…SANQYFLFLY (75 aa). A Tyr recombinase domain is found at 90-238; the sequence is VQKKTQSSES…TITALEKYYR (149 aa). Residues Lys-154 and Arg-204 contribute to the active site. The active-site O-(3'-phospho-DNA)-tyrosine intermediate is the Tyr-236.

It belongs to the 'phage' integrase family. XerD-like subfamily.

It localises to the cytoplasm. Putative tyrosine recombinase. Not involved in the cutting and rejoining of the recombining DNA molecules on dif(SL) site. The chain is Tyrosine recombinase XerD-like from Lactococcus lactis subsp. cremoris (strain SK11).